We begin with the raw amino-acid sequence, 281 residues long: Spermatogenesis-associated serine-rich protein 1 (281 aa).

A compositionally biased stretch (basic and acidic residues) spans 1 to 14 (MEAARDAQHSDVLE). The segment at 1 to 92 (MEAARDAQHS…SSSAQANRSL (92 aa)) is disordered. Positions 21–37 (SRTSSHQNRRASLSSDG) are enriched in polar residues. Residue Thr53 is modified to Phosphothreonine. Polar residues predominate over residues 54 to 65 (PSDTASGLGQKT). The segment covering 66 to 85 (SSTSSSSSSSSSSSPSSSSS) has biased composition (low complexity). Residues Ser71, Ser74, Ser77, Ser78, Ser79, and Ser91 each carry the phosphoserine modification.

In terms of tissue distribution, detected in pachytene spermatocytes and round spermatids.

The protein is Spermatogenesis-associated serine-rich protein 1 (Spats1) of Rattus norvegicus (Rat).